The following is a 302-amino-acid chain: Forkhead box protein R2 (302 aa).

A DNA-binding region (fork-head) is located at residues 183–285 (RPPLNYSHLV…RVLAYARRES (103 aa)).

It localises to the nucleus. This is Forkhead box protein R2 (Foxr2) from Mus musculus (Mouse).